A 193-amino-acid polypeptide reads, in one-letter code: SCO1 protein homolog (193 aa).

Positions 1–18 (MKVIKGLTAGLIFLFLCA) are cleaved as a signal peptide. C19 carries the N-palmitoyl cysteine lipid modification. The S-diacylglycerol cysteine moiety is linked to residue C19. Residues 26 to 191 (DPLNYEVEPF…IISDVKSAST (166 aa)) enclose the Thioredoxin domain. Cu cation-binding residues include C64, C68, and H154.

This sequence belongs to the SCO1/2 family. Monomer.

Its subcellular location is the cell membrane. Its function is as follows. Necessary for insertion of copper into the active site of cytochrome c oxidase. May play a role in copper homeostasis or redox signaling. The sequence is that of SCO1 protein homolog (ypmQ) from Bacillus subtilis (strain 168).